The primary structure comprises 658 residues: CXXC-type zinc finger protein 1 (658 aa).

Met-1 bears the N-acetylmethionine mark. Positions 1 to 14 are enriched in acidic residues; sequence MEGDASDPEPPDAG. Residues 1-20 are disordered; sequence MEGDASDPEPPDAGEDSKSE. Ser-6 and Ser-19 each carry phosphoserine. Residues 28-76 form a PHD-type zinc finger; the sequence is YCICRKPDINCFMIGCDNCNEWFHGDCIRITEKMAKAIREWYCRECREK. Residues 84 to 164 are disordered; that stretch reads YRHKKSRERD…HQQQQQQQQI (81 aa). The segment covering 90–120 has biased composition (basic and acidic residues); that stretch reads RERDSSERDGSEPRDEGGGRKRPAPDPDLQR. Residues 153-163 are compositionally biased toward low complexity; that stretch reads QHHQQQQQQQQ. Residues 162–211 form a CXXC-type zinc finger; the sequence is QQIKRSARMCGECEACRRTEDCGHCDFCRDMKKFGGPNKIRQKCRLRQCQ. Positions 171, 174, 177, 183, 186, 189, 205, and 210 each coordinate Zn(2+). Disordered regions lie at residues 221-285 and 327-373; these read FPSS…SDED and VKVK…DPAS. Ser-226 is subject to Phosphoserine. Phosphothreonine is present on Thr-229. Lys-252 is covalently cross-linked (Glycyl lysine isopeptide (Lys-Gly) (interchain with G-Cter in SUMO2)). Basic residues predominate over residues 327–336; the sequence is VKVKHVKRRE. Positions 337–347 are enriched in basic and acidic residues; sequence KKSEKKKDERY. The span at 348 to 360 shows a compositional bias: basic residues; it reads KRHRQKQKHKDKW. Positions 361–370 are enriched in basic and acidic residues; it reads KHPERADAKD. Residues 428–470 adopt a coiled-coil conformation; the sequence is GKKLLERIRREQQSARTRLQEMERRFHELEAIILRAKQQAVRE.

Component of the SET1 complex, at least composed of the catalytic subunit (SETD1A or SETD1B), WDR5, WDR82, RBBP5, ASH2L/ASH2, CXXC1/CFP1, HCFC1 and DPY30. Interacts with SETD1A. Interacts with ZNF335. Interacts with PRDM9; this interaction does not link PRDM9-activated recombination hotspot sites with DSB machinery and is not required for the hotspot recognition pathway. Interacts with histone H3K4me3. May be regulated by proteolysis.

Its subcellular location is the nucleus speckle. The protein localises to the nucleus. Functionally, transcriptional activator that exhibits a unique DNA binding specificity for CpG unmethylated motifs with a preference for CpGG. In Bos taurus (Bovine), this protein is CXXC-type zinc finger protein 1 (CXXC1).